The following is a 201-amino-acid chain: FMN-dependent NADH:quinone oxidoreductase (201 aa).

FMN is bound by residues Ser-10, 16-18 (SQS), 96-99 (MYNF), and 140-143 (SRGG).

The protein belongs to the azoreductase type 1 family. In terms of assembly, homodimer. It depends on FMN as a cofactor.

It catalyses the reaction 2 a quinone + NADH + H(+) = 2 a 1,4-benzosemiquinone + NAD(+). The enzyme catalyses N,N-dimethyl-1,4-phenylenediamine + anthranilate + 2 NAD(+) = 2-(4-dimethylaminophenyl)diazenylbenzoate + 2 NADH + 2 H(+). Functionally, quinone reductase that provides resistance to thiol-specific stress caused by electrophilic quinones. Its function is as follows. Also exhibits azoreductase activity. Catalyzes the reductive cleavage of the azo bond in aromatic azo compounds to the corresponding amines. The protein is FMN-dependent NADH:quinone oxidoreductase of Escherichia coli O6:H1 (strain CFT073 / ATCC 700928 / UPEC).